The chain runs to 187 residues: dCTP deaminase, dUMP-forming (187 aa).

DCTP-binding positions include 99–104 (KSSIAR), Asp-117, 125–127 (TLE), Gln-146, Tyr-159, Lys-166, and Gln-170. Glu-127 functions as the Proton donor/acceptor in the catalytic mechanism.

Belongs to the dCTP deaminase family. As to quaternary structure, homotrimer.

It catalyses the reaction dCTP + 2 H2O = dUMP + NH4(+) + diphosphate. It participates in pyrimidine metabolism; dUMP biosynthesis; dUMP from dCTP: step 1/1. Functionally, bifunctional enzyme that catalyzes both the deamination of dCTP to dUTP and the hydrolysis of dUTP to dUMP without releasing the toxic dUTP intermediate. The protein is dCTP deaminase, dUMP-forming of Methanoculleus marisnigri (strain ATCC 35101 / DSM 1498 / JR1).